The primary structure comprises 130 residues: Large ribosomal subunit protein bL12 (130 aa).

This sequence belongs to the bacterial ribosomal protein bL12 family. Homodimer. Part of the ribosomal stalk of the 50S ribosomal subunit. Forms a multimeric L10(L12)X complex, where L10 forms an elongated spine to which 2 to 4 L12 dimers bind in a sequential fashion. Binds GTP-bound translation factors.

Functionally, forms part of the ribosomal stalk which helps the ribosome interact with GTP-bound translation factors. Is thus essential for accurate translation. The sequence is that of Large ribosomal subunit protein bL12 from Chlamydia trachomatis serovar L2 (strain ATCC VR-902B / DSM 19102 / 434/Bu).